A 96-amino-acid chain; its full sequence is MEAEALKFFIACVTAAGFGIAIAAFGCGIGQGLGLKAAAEGVARNPEASGKITVTMLIGLAMIESLCIYALVVALILIFASPMTATVTGLLTGAGH.

The next 2 helical transmembrane spans lie at 9-29 (FIAC…GCGI) and 58-78 (IGLA…LILI).

The protein belongs to the ATPase C chain family. As to quaternary structure, F-type ATPases have 2 components, F(1) - the catalytic core - and F(0) - the membrane proton channel. F(1) has five subunits: alpha(3), beta(3), gamma(1), delta(1), epsilon(1). F(0) has three main subunits: a(1), b(2) and c(10-14). The alpha and beta chains form an alternating ring which encloses part of the gamma chain. F(1) is attached to F(0) by a central stalk formed by the gamma and epsilon chains, while a peripheral stalk is formed by the delta and b chains.

The protein localises to the cell inner membrane. Its function is as follows. F(1)F(0) ATP synthase produces ATP from ADP in the presence of a proton or sodium gradient. F-type ATPases consist of two structural domains, F(1) containing the extramembraneous catalytic core and F(0) containing the membrane proton channel, linked together by a central stalk and a peripheral stalk. During catalysis, ATP synthesis in the catalytic domain of F(1) is coupled via a rotary mechanism of the central stalk subunits to proton translocation. Key component of the F(0) channel; it plays a direct role in translocation across the membrane. A homomeric c-ring of between 10-14 subunits forms the central stalk rotor element with the F(1) delta and epsilon subunits. The sequence is that of ATP synthase subunit c from Desulfosudis oleivorans (strain DSM 6200 / JCM 39069 / Hxd3) (Desulfococcus oleovorans).